Reading from the N-terminus, the 492-residue chain is Cobyric acid synthase (492 aa).

Positions 259 to 453 constitute a GATase cobBQ-type domain; the sequence is HTTVAVVAYP…LHGLFEDAVA (195 aa). Cys-340 (nucleophile) is an active-site residue. Residue His-445 is part of the active site.

The protein belongs to the CobB/CobQ family. CobQ subfamily.

Its pathway is cofactor biosynthesis; adenosylcobalamin biosynthesis. In terms of biological role, catalyzes amidations at positions B, D, E, and G on adenosylcobyrinic A,C-diamide. NH(2) groups are provided by glutamine, and one molecule of ATP is hydrogenolyzed for each amidation. This chain is Cobyric acid synthase, found in Paracidovorax citrulli (strain AAC00-1) (Acidovorax citrulli).